Consider the following 218-residue polypeptide: Cytochrome b6 (218 aa).

The helical transmembrane segment at isoleucine 35 to phenylalanine 55 threads the bilayer. Residue cysteine 38 coordinates heme c. Residues histidine 89 and histidine 103 each coordinate heme b. 3 helical membrane-spanning segments follow: residues alanine 93–phenylalanine 113, leucine 119–tyrosine 139, and leucine 189–isoleucine 209. Heme b contacts are provided by histidine 190 and histidine 205.

This sequence belongs to the cytochrome b family. PetB subfamily. The 4 large subunits of the cytochrome b6-f complex are cytochrome b6, subunit IV (17 kDa polypeptide, PetD), cytochrome f and the Rieske protein, while the 4 small subunits are PetG, PetL, PetM and PetN. The complex functions as a dimer. Heme b serves as cofactor. The cofactor is heme c.

The protein resides in the cellular thylakoid membrane. In terms of biological role, component of the cytochrome b6-f complex, which mediates electron transfer between photosystem II (PSII) and photosystem I (PSI), cyclic electron flow around PSI, and state transitions. The sequence is that of Cytochrome b6 from Synechococcus sp. (strain WH7803).